A 74-amino-acid chain; its full sequence is Defensin Lc-def (74 aa).

Residues 1 to 27 form the signal peptide; that stretch reads MEKKTVAALSFLFIVLFVAQEIAVTEA. Disulfide bonds link C30–C74, C41–C62, C47–C68, and C51–C70.

The protein localises to the secreted. Has antifungal activity against the phytopathogenic fungus A.niger VKM F-2259, but not against A.alternata VKM F-3047. Does not inhibit trypsin or chymotrypsin. The polypeptide is Defensin Lc-def (Lens culinaris subsp. culinaris (Cultivated lentil)).